Reading from the N-terminus, the 138-residue chain is Acidic phospholipase A2 BthA-1 (138 aa).

The first 16 residues, 1–16 (MRTLWIMAVLLVGVEG), serve as a signal peptide directing secretion. Cystine bridges form between Cys42-Cys131, Cys44-Cys60, Cys59-Cys111, Cys65-Cys138, Cys66-Cys104, Cys73-Cys97, and Cys91-Cys102. Positions 43, 47, and 48 each coordinate Ca(2+). His63 is an active-site residue. Residue Asp64 coordinates Ca(2+). The active site involves Asp105.

This sequence belongs to the phospholipase A2 family. Group II subfamily. D49 sub-subfamily. Homodimer; non-covalently linked. Ca(2+) is required as a cofactor. As to expression, expressed by the venom gland.

It localises to the secreted. It catalyses the reaction a 1,2-diacyl-sn-glycero-3-phosphocholine + H2O = a 1-acyl-sn-glycero-3-phosphocholine + a fatty acid + H(+). With respect to regulation, inhibited by EDTA and bromophenacyl bromide (BPB). Its function is as follows. Snake venom phospholipase A2 (PLA2) that displays edema-inducing activities (activity that is inhibited by EDTA and dexamethasone), inhibits phospholipid-dependent collagen/ADP-induced platelet aggregation, possess hypotensive as well as anticoagulant activities. In addition, this enzyme shows bactericidal activity against E.coli and S.aureus. PLA2 catalyzes the calcium-dependent hydrolysis of the 2-acyl groups in 3-sn-phosphoglycerides. The chain is Acidic phospholipase A2 BthA-1 from Bothrops jararacussu (Jararacussu).